A 300-amino-acid polypeptide reads, in one-letter code: Acetyl-coenzyme A carboxylase carboxyl transferase subunit beta (300 aa).

In terms of domain architecture, CoA carboxyltransferase N-terminal spans 24–293 (LWTNCESCSQ…NAPGAALGGA (270 aa)). Zn(2+) contacts are provided by Cys-28, Cys-31, Cys-47, and Cys-50. Residues 28–50 (CESCSQMILVKDLQKAMNVCPHC) form a C4-type zinc finger.

It belongs to the AccD/PCCB family. As to quaternary structure, acetyl-CoA carboxylase is a heterohexamer composed of biotin carboxyl carrier protein (AccB), biotin carboxylase (AccC) and two subunits each of ACCase subunit alpha (AccA) and ACCase subunit beta (AccD). The cofactor is Zn(2+).

It localises to the cytoplasm. The catalysed reaction is N(6)-carboxybiotinyl-L-lysyl-[protein] + acetyl-CoA = N(6)-biotinyl-L-lysyl-[protein] + malonyl-CoA. Its pathway is lipid metabolism; malonyl-CoA biosynthesis; malonyl-CoA from acetyl-CoA: step 1/1. In terms of biological role, component of the acetyl coenzyme A carboxylase (ACC) complex. Biotin carboxylase (BC) catalyzes the carboxylation of biotin on its carrier protein (BCCP) and then the CO(2) group is transferred by the transcarboxylase to acetyl-CoA to form malonyl-CoA. This Gluconacetobacter diazotrophicus (strain ATCC 49037 / DSM 5601 / CCUG 37298 / CIP 103539 / LMG 7603 / PAl5) protein is Acetyl-coenzyme A carboxylase carboxyl transferase subunit beta.